Consider the following 180-residue polypeptide: ATP synthase subunit delta (180 aa).

Belongs to the ATPase delta chain family. F-type ATPases have 2 components, F(1) - the catalytic core - and F(0) - the membrane proton channel. F(1) has five subunits: alpha(3), beta(3), gamma(1), delta(1), epsilon(1). F(0) has three main subunits: a(1), b(2) and c(10-14). The alpha and beta chains form an alternating ring which encloses part of the gamma chain. F(1) is attached to F(0) by a central stalk formed by the gamma and epsilon chains, while a peripheral stalk is formed by the delta and b chains.

The protein resides in the cell membrane. In terms of biological role, f(1)F(0) ATP synthase produces ATP from ADP in the presence of a proton or sodium gradient. F-type ATPases consist of two structural domains, F(1) containing the extramembraneous catalytic core and F(0) containing the membrane proton channel, linked together by a central stalk and a peripheral stalk. During catalysis, ATP synthesis in the catalytic domain of F(1) is coupled via a rotary mechanism of the central stalk subunits to proton translocation. Its function is as follows. This protein is part of the stalk that links CF(0) to CF(1). It either transmits conformational changes from CF(0) to CF(1) or is implicated in proton conduction. This Dehalococcoides mccartyi (strain ATCC BAA-2100 / JCM 16839 / KCTC 5957 / BAV1) protein is ATP synthase subunit delta.